The chain runs to 100 residues: uncharacterized protein (100 aa).

This is an uncharacterized protein from Mycoplasma genitalium (strain ATCC 33530 / DSM 19775 / NCTC 10195 / G37) (Mycoplasmoides genitalium).